Reading from the N-terminus, the 229-residue chain is Cytidylate kinase (229 aa).

10-18 (GPAGSGKST) contributes to the ATP binding site.

The protein belongs to the cytidylate kinase family. Type 1 subfamily.

It localises to the cytoplasm. The catalysed reaction is CMP + ATP = CDP + ADP. The enzyme catalyses dCMP + ATP = dCDP + ADP. This is Cytidylate kinase from Leptospira interrogans serogroup Icterohaemorrhagiae serovar Lai (strain 56601).